The following is a 406-amino-acid chain: Tryptophan synthase beta chain (406 aa).

At Lys-99 the chain carries N6-(pyridoxal phosphate)lysine.

Belongs to the TrpB family. As to quaternary structure, tetramer of two alpha and two beta chains. Pyridoxal 5'-phosphate serves as cofactor.

It catalyses the reaction (1S,2R)-1-C-(indol-3-yl)glycerol 3-phosphate + L-serine = D-glyceraldehyde 3-phosphate + L-tryptophan + H2O. The protein operates within amino-acid biosynthesis; L-tryptophan biosynthesis; L-tryptophan from chorismate: step 5/5. In terms of biological role, the beta subunit is responsible for the synthesis of L-tryptophan from indole and L-serine. The protein is Tryptophan synthase beta chain of Brucella melitensis biotype 2 (strain ATCC 23457).